The following is a 497-amino-acid chain: Arginine/ornithine antiporter ArcD2 (497 aa).

13 consecutive transmembrane segments (helical) span residues 8-28, 41-61, 88-108, 127-147, 160-180, 220-240, 255-275, 297-317, 354-374, 378-398, 406-426, 429-449, and 462-482; these read GISLFALLAIIISGAIGGGVF, GGVVISWLFIGFGILMLVLSF, FLSGWGYWISAWTGTIGFAVL, SLTILSVIIVSIISWILMLLV, IVMIAKLIPLVVFSITGIILF, IKGSLMVMVWVFVGIEGATMM, VIGLAVLLVIYVLLSLLPYGY, VGGWGGSLMAVGLMISLLGAW, LLITQLMIQIFIIITYFVANA, FIYMATAVIMICYALVGAYLF, SVKNILIGFFTFAFQALALYL, WQYVWLAMILYTIGFLLFIGA, and WLGMLVVTVLGVLAIVVLICG.

The protein belongs to the amino acid-polyamine-organocation (APC) superfamily. Basic amino acid/polyamine antiporter (APA) (TC 2.A.3.2) family.

Its subcellular location is the cell membrane. It catalyses the reaction L-ornithine(in) + L-arginine(out) = L-ornithine(out) + L-arginine(in). Catalyzes electroneutral exchange between L-arginine and L-ornithine. Can also efficiently translocate L-alanine. May function in vivo as a L-arginine/L-alanine exchanger in a pathway together with the arcT gene, which is found adjacent to the arcD2 gene in the ADI gene cluster. The protein is Arginine/ornithine antiporter ArcD2 of Lactococcus lactis subsp. cremoris (strain MG1363).